The following is a 201-amino-acid chain: Single-stranded DNA-binding protein, mitochondrial (201 aa).

The region spanning 71–184 (VHRAIICGKV…RDGKIRMIKY (114 aa)) is the SSB domain.

It localises to the mitochondrion. Binds to ss-DNA. This chain is Single-stranded DNA-binding protein, mitochondrial, found in Arabidopsis thaliana (Mouse-ear cress).